We begin with the raw amino-acid sequence, 465 residues long: MESLRIYNTLARDKQVFVPRQSGEVRMYVCGITVYDYCHVGHARMLVVFDLVQRWLRAIGYRVTYVRNITDIDDKIIRRAVENGETIKSLTDRFIGAMHDDESALGIQRPDIEPRATEFIPQMLGMIETLETNGYAYQATDGDVNYSVRKFANYGKLSGKSLDDLRAGERVAANDAKEDPLDFVLWKRAKPEDPEGTSWASKYGMGRPGWHIECSAMGCTLLGEHFDIHGGGQDLQFPHHENEIAQSEGATGQTFVNYWMHNGFVQVDNEKMSKSLGNFFTIREVLERYDAEVMRFFIVRTHYRSPLNYSDVHLDDARASLTRLYTALKDVEADTLALDWNEPHAQRFAAAMNDDFNTPVAVATLFELAGEVNRTRDASLARQLKQLAGLLGLLGREPRAFLQQASGAAQAGGLAADEIEAKIAARVAAKQAKDYAEADRIRAELLETGIALEDKPGGSTEWRRV.

Residue Cys30 coordinates Zn(2+). Residues Ile32–His42 carry the 'HIGH' region motif. The Zn(2+) site is built by Cys214, His239, and Glu243. The short motif at Lys271–Ser275 is the 'KMSKS' region element. An ATP-binding site is contributed by Lys274.

It belongs to the class-I aminoacyl-tRNA synthetase family. Monomer. Zn(2+) serves as cofactor.

The protein resides in the cytoplasm. It catalyses the reaction tRNA(Cys) + L-cysteine + ATP = L-cysteinyl-tRNA(Cys) + AMP + diphosphate. The polypeptide is Cysteine--tRNA ligase 2 (Burkholderia lata (strain ATCC 17760 / DSM 23089 / LMG 22485 / NCIMB 9086 / R18194 / 383)).